The sequence spans 154 residues: uncharacterized protein (154 aa).

This is an uncharacterized protein from Sulfolobus islandicus rod-shaped virus 1 (SIRV-1).